The chain runs to 635 residues: 1-deoxy-D-xylulose-5-phosphate synthase (635 aa).

Residues histidine 76 and 117–119 (GHS) each bind thiamine diphosphate. Mg(2+) is bound at residue aspartate 148. Residues 149–150 (GA), asparagine 177, tyrosine 294, and glutamate 379 each bind thiamine diphosphate. Asparagine 177 is a Mg(2+) binding site.

It belongs to the transketolase family. DXPS subfamily. Homodimer. Mg(2+) serves as cofactor. Requires thiamine diphosphate as cofactor.

The catalysed reaction is D-glyceraldehyde 3-phosphate + pyruvate + H(+) = 1-deoxy-D-xylulose 5-phosphate + CO2. The protein operates within metabolic intermediate biosynthesis; 1-deoxy-D-xylulose 5-phosphate biosynthesis; 1-deoxy-D-xylulose 5-phosphate from D-glyceraldehyde 3-phosphate and pyruvate: step 1/1. Its function is as follows. Catalyzes the acyloin condensation reaction between C atoms 2 and 3 of pyruvate and glyceraldehyde 3-phosphate to yield 1-deoxy-D-xylulose-5-phosphate (DXP). The chain is 1-deoxy-D-xylulose-5-phosphate synthase from Neisseria meningitidis serogroup C (strain 053442).